We begin with the raw amino-acid sequence, 306 residues long: Heme A synthase (306 aa).

At 1-5 (MKALR) the chain is on the cytoplasmic side. Residues 6 to 26 (AVSLANTAVMLLAVLWGAWVT) traverse the membrane as a helical segment. The Extracellular segment spans residues 27–56 (SSDSGDGCGASWPLCKGTFMPDWDYAAIVE). Cysteines 34 and 41 form a disulfide. The active site involves glutamate 56. The helical transmembrane segment at 57 to 77 (FGHRVVSALAGLLSVAVLVWV) threads the bilayer. Histidine 59 contacts heme o. The Cytoplasmic portion of the chain corresponds to 78–89 (ARVRPSETRLKR). Residues 90 to 110 (LAFGTFFFVVLQGGLGAAAVL) traverse the membrane as a helical segment. The Extracellular segment spans residues 111-116 (RPQPDL). The chain crosses the membrane as a helical span at residues 117–137 (VMALHFGFSLLCFTFALLVTV). Histidine 121 contacts heme o. Topologically, residues 138 to 164 (ALGQGERAAFQRPDVSAQPVAPGLRTQ) are cytoplasmic. A helical transmembrane segment spans residues 165-185 (IWGLAVYTYLVVYLGAYVRHL). Residues 186–206 (GASMACTGWPLCNGELIPPLY) lie on the Extracellular side of the membrane. A disulfide bond links cysteine 191 and cysteine 197. The chain crosses the membrane as a helical span at residues 207–227 (GPVGANFAHRLGAALAVVLVL). Histidine 215 contributes to the heme b binding site. Residues 228–247 (RLWWTARRLTERDDLRRGAA) are Cytoplasmic-facing. A helical transmembrane segment spans residues 248-268 (WALALMAAQVASGALFPLGYL). The Extracellular portion of the chain corresponds to 269-277 (NLLTQLLHT). Position 276 (histidine 276) interacts with heme b. Residues 278-298 (GLITGFWGVLSYLCYLTLPVG) traverse the membrane as a helical segment. The Cytoplasmic portion of the chain corresponds to 299-306 (RETVAVSA).

Belongs to the COX15/CtaA family. Type 1 subfamily. In terms of assembly, interacts with CtaB. Heme b is required as a cofactor.

The protein resides in the cell membrane. The catalysed reaction is Fe(II)-heme o + 2 A + H2O = Fe(II)-heme a + 2 AH2. It participates in porphyrin-containing compound metabolism; heme A biosynthesis; heme A from heme O: step 1/1. Its function is as follows. Catalyzes the conversion of heme O to heme A by two successive hydroxylations of the methyl group at C8. The first hydroxylation forms heme I, the second hydroxylation results in an unstable dihydroxymethyl group, which spontaneously dehydrates, resulting in the formyl group of heme A. The polypeptide is Heme A synthase (Symbiobacterium thermophilum (strain DSM 24528 / JCM 14929 / IAM 14863 / T)).